A 308-amino-acid polypeptide reads, in one-letter code: Putative integrase/recombinase y4qK (308 aa).

The Core-binding (CB) domain occupies 15–97 (LVMTPLRQRM…ALRFFFSVTL (83 aa)). Residues 115–288 (KLPIILSPDE…ATNKVCATSS (174 aa)) enclose the Tyr recombinase domain. Active-site residues include R150, K175, H240, R243, and H266. The active-site O-(3'-phospho-DNA)-tyrosine intermediate is Y275.

The protein belongs to the 'phage' integrase family.

Functionally, may function as an integrase. The polypeptide is Putative integrase/recombinase y4qK (Sinorhizobium fredii (strain NBRC 101917 / NGR234)).